Consider the following 125-residue polypeptide: Glycine cleavage system H protein (125 aa).

The region spanning 23–103 (TALVGITDFA…PYNAWLIKMK (81 aa)) is the Lipoyl-binding domain. Lys-64 is modified (N6-lipoyllysine).

This sequence belongs to the GcvH family. As to quaternary structure, the glycine cleavage system is composed of four proteins: P, T, L and H. (R)-lipoate is required as a cofactor.

In terms of biological role, the glycine cleavage system catalyzes the degradation of glycine. The H protein shuttles the methylamine group of glycine from the P protein to the T protein. The chain is Glycine cleavage system H protein from Chlorobium chlorochromatii (strain CaD3).